The sequence spans 1105 residues: ATP-dependent DNA helicase MPH1 (1105 aa).

Positions 94–261 constitute a Helicase ATP-binding domain; the sequence is IVQRAFYDNL…EIIDNLSISK (168 aa). 107 to 114 is an ATP binding site; the sequence is LPTGLGKT. The DEAH box motif lies at 209–212; that stretch reads DEAH. The region spanning 468 to 641 is the Helicase C-terminal domain; that stretch reads SIERIGSNLR…LITLAQSNRI (174 aa). 5 disordered regions span residues 493–534, 684–708, 758–824, 850–880, and 918–953; these read EEAY…AQIK, KGKKVTKSKSKSKSNSKSKKIEKRF, IQSK…PKLG, LVTGKSTSPPENVAEKRNSPILNSSNRECAP, and VSDDEKSVEDSINNQQLHKNKNLGSTSDDDDAFDEG. Positions 499 to 511 are enriched in basic residues; it reads KGKKGRTKGKATK. Residues 518–532 are compositionally biased toward basic and acidic residues; sequence TPERSTSRTSSEDAQ. Residues 684 to 705 are compositionally biased toward basic residues; the sequence is KGKKVTKSKSKSKSNSKSKKIE. Residues 764-787 show a composition bias toward basic and acidic residues; it reads PVKENQSKRPNSEHICEEDSRQET. Over residues 788–799 the composition is skewed to low complexity; the sequence is ENNSNESNGSFE. Positions 927–943 are enriched in polar residues; that stretch reads DSINNQQLHKNKNLGST. The span at 944–953 shows a compositional bias: acidic residues; the sequence is SDDDDAFDEG.

The protein belongs to the DEAD box helicase family. DEAH subfamily. FANCM sub-subfamily. Interacts with the MHF histone-fold complex to form the FANCM-MHF complex.

It localises to the nucleus. It catalyses the reaction ATP + H2O = ADP + phosphate + H(+). Its function is as follows. ATP-dependent DNA helicase involved in DNA damage repair by homologous recombination and in genome maintenance. Capable of unwinding D-loops. Plays a role in limiting crossover recombinants during mitotic DNA double-strand break (DSB) repair. Component of a FANCM-MHF complex which promotes gene conversion at blocked replication forks, probably by reversal of the stalled fork. In Debaryomyces hansenii (strain ATCC 36239 / CBS 767 / BCRC 21394 / JCM 1990 / NBRC 0083 / IGC 2968) (Yeast), this protein is ATP-dependent DNA helicase MPH1.